Consider the following 530-residue polypeptide: Bifunctional purine biosynthesis protein PurH (530 aa).

One can recognise an MGS-like domain in the interval Met-1–Val-148.

The protein belongs to the PurH family.

It catalyses the reaction (6R)-10-formyltetrahydrofolate + 5-amino-1-(5-phospho-beta-D-ribosyl)imidazole-4-carboxamide = 5-formamido-1-(5-phospho-D-ribosyl)imidazole-4-carboxamide + (6S)-5,6,7,8-tetrahydrofolate. The enzyme catalyses IMP + H2O = 5-formamido-1-(5-phospho-D-ribosyl)imidazole-4-carboxamide. It participates in purine metabolism; IMP biosynthesis via de novo pathway; 5-formamido-1-(5-phospho-D-ribosyl)imidazole-4-carboxamide from 5-amino-1-(5-phospho-D-ribosyl)imidazole-4-carboxamide (10-formyl THF route): step 1/1. It functions in the pathway purine metabolism; IMP biosynthesis via de novo pathway; IMP from 5-formamido-1-(5-phospho-D-ribosyl)imidazole-4-carboxamide: step 1/1. The polypeptide is Bifunctional purine biosynthesis protein PurH (Vibrio vulnificus (strain YJ016)).